A 306-amino-acid chain; its full sequence is Putative syntaxin-131 (306 aa).

An N-acetylmethionine modification is found at methionine 1. The Cytoplasmic portion of the chain corresponds to 1 to 276 (MNDLLKGSLE…AVKSQKSSRK (276 aa)). Over residues 11–23 (FSRDRSNRSDIES) the composition is skewed to basic and acidic residues. The tract at residues 11–35 (FSRDRSNRSDIESGHGPGNSGDLGL) is disordered. 2 coiled-coil regions span residues 35–72 (LSGFFKKVQEIEKQYEKLDKHLNKLQGAHEETKAVTKA) and 134–162 (KKKFKDKISEFQTLRQNIQQEYREVVERR). A t-SNARE coiled-coil homology domain is found at 205–267 (LAEIQERHDA…QSGNNQLTKA (63 aa)). Residues 277–297 (WMCIAILILLIIIIITVISVL) form a helical; Anchor for type IV membrane protein membrane-spanning segment. Topologically, residues 298–306 (KPWTQKNGA) are vesicular.

The protein belongs to the syntaxin family. As to quaternary structure, part of the t-SNARE complex.

It localises to the membrane. Functionally, vesicle trafficking protein that functions in the secretory pathway. The sequence is that of Putative syntaxin-131 (SYP131) from Arabidopsis thaliana (Mouse-ear cress).